A 330-amino-acid polypeptide reads, in one-letter code: Glycerol-3-phosphate dehydrogenase [NAD(P)+] (330 aa).

Residues tryptophan 13, arginine 33, and lysine 103 each contribute to the NADPH site. 3 residues coordinate sn-glycerol 3-phosphate: lysine 103, glycine 131, and threonine 133. Residue alanine 135 coordinates NADPH. Sn-glycerol 3-phosphate is bound by residues lysine 186, aspartate 239, serine 249, arginine 250, and asparagine 251. The Proton acceptor role is filled by lysine 186. Arginine 250 lines the NADPH pocket. Residues valine 274 and glutamate 276 each contribute to the NADPH site.

Belongs to the NAD-dependent glycerol-3-phosphate dehydrogenase family.

The protein resides in the cytoplasm. The catalysed reaction is sn-glycerol 3-phosphate + NAD(+) = dihydroxyacetone phosphate + NADH + H(+). It carries out the reaction sn-glycerol 3-phosphate + NADP(+) = dihydroxyacetone phosphate + NADPH + H(+). Its pathway is membrane lipid metabolism; glycerophospholipid metabolism. Functionally, catalyzes the reduction of the glycolytic intermediate dihydroxyacetone phosphate (DHAP) to sn-glycerol 3-phosphate (G3P), the key precursor for phospholipid synthesis. The protein is Glycerol-3-phosphate dehydrogenase [NAD(P)+] of Erythrobacter litoralis (strain HTCC2594).